Reading from the N-terminus, the 316-residue chain is Transaldolase (316 aa).

K132 serves as the catalytic Schiff-base intermediate with substrate.

It belongs to the transaldolase family. Type 1 subfamily. As to quaternary structure, homodimer.

The protein resides in the cytoplasm. It catalyses the reaction D-sedoheptulose 7-phosphate + D-glyceraldehyde 3-phosphate = D-erythrose 4-phosphate + beta-D-fructose 6-phosphate. Its pathway is carbohydrate degradation; pentose phosphate pathway; D-glyceraldehyde 3-phosphate and beta-D-fructose 6-phosphate from D-ribose 5-phosphate and D-xylulose 5-phosphate (non-oxidative stage): step 2/3. Its function is as follows. Transaldolase is important for the balance of metabolites in the pentose-phosphate pathway. This is Transaldolase from Aliivibrio fischeri (strain MJ11) (Vibrio fischeri).